The primary structure comprises 552 residues: MAGUK p55 subfamily member 2 (552 aa).

2 consecutive L27 domains span residues 8–59 (SESA…EETK) and 60–118 (LEAV…YETP). Position 42 is a phosphoserine (S42). Position 117 is a phosphothreonine (T117). At S121 the chain carries Phosphoserine. The PDZ domain occupies 140-219 (MVGIRKTAGE…SVILKILPSY (80 aa)). One can recognise an SH3 domain in the interval 225 to 293 (PRQVFVKCHF…PSQLLEEKRK (69 aa)). Positions 350 to 537 (RKTLVLIGAQ…TFRELQTAME (188 aa)) constitute a Guanylate kinase-like domain.

This sequence belongs to the MAGUK family. Can homomultimerise. Interacts with CACNG2. Interacts (via the SH3-Guanylate kinase-like sub-module) with DLG4/PSD95 and DLGAP1/GKAP. Interacts (via the PDZ domain) with CADM1 (via C-terminus). Interacts with KCNN2/SK2 (via N-terminal domain). Interacts with SRC. Phosphorylated by SRC. Expressed in hippocampal neurons.

Its subcellular location is the cell projection. The protein localises to the dendrite. It is found in the postsynaptic density. The protein resides in the cytoplasm. It localises to the cytoskeleton. Its subcellular location is the membrane. Postsynaptic MAGUK scaffold protein that links CADM1 cell adhesion molecules to core components of the postsynaptic density. In CA1 pyramidal neurons, required for synaptic KCNN2-containing channel function and long-term potentiation expression. Seems to negatively regulate SRC function in epithelial cells. The protein is MAGUK p55 subfamily member 2 of Rattus norvegicus (Rat).